We begin with the raw amino-acid sequence, 255 residues long: Large ribosomal subunit protein uL2 (255 aa).

The interval 201–229 (YAHPHGGGSHQQGGTPVKKNAPPGQKVGF) is disordered.

It belongs to the universal ribosomal protein uL2 family. Part of the 50S ribosomal subunit. Forms a bridge to the 30S subunit in the 70S ribosome.

One of the primary rRNA binding proteins. Required for association of the 30S and 50S subunits to form the 70S ribosome, for tRNA binding and peptide bond formation. It has been suggested to have peptidyltransferase activity; this is somewhat controversial. Makes several contacts with the 16S rRNA in the 70S ribosome. This chain is Large ribosomal subunit protein uL2, found in Caldivirga maquilingensis (strain ATCC 700844 / DSM 13496 / JCM 10307 / IC-167).